Here is a 597-residue protein sequence, read N- to C-terminus: Histidine protein kinase DivJ (597 aa).

The next 6 membrane-spanning stretches (helical) occupy residues 40–57 (LGWLAAVCLAAAAALFTA), 62–81 (WPVWAALGAGALPALVSLIF), 91–109 (WLLVLWAVGGSLAAVLTGG), 110–125 (VGGAMAAWCLAPVAAA), 137–158 (GAALALIGACVAALTQLSGLAP), and 159–188 (AAPTGPLAFVLGFLALVTTGLGLAAGLLIG). The Histidine kinase domain occupies 335 to 553 (NMSHELRTPL…TVSVRLPVLL (219 aa)). Histidine 338 is subject to Phosphohistidine; by autocatalysis. Pro residues predominate over residues 561–585 (PTPPAAPEAPSAPEPAPTVEEPPPA). The disordered stretch occupies residues 561-597 (PTPPAAPEAPSAPEPAPTVEEPPPASLGDNVIAFAPR).

It localises to the cell membrane. It carries out the reaction ATP + protein L-histidine = ADP + protein N-phospho-L-histidine.. Functionally, kinase required for the regulation of cell division and differentiation. Is part of a signal transduction pathway, activating PleD by phosphorylation. In Caulobacter vibrioides (strain ATCC 19089 / CIP 103742 / CB 15) (Caulobacter crescentus), this protein is Histidine protein kinase DivJ (divJ).